We begin with the raw amino-acid sequence, 298 residues long: Bifunctional protein FolD (298 aa).

Residues G166 to S168, S191, and I232 contribute to the NADP(+) site.

The protein belongs to the tetrahydrofolate dehydrogenase/cyclohydrolase family. Homodimer.

The enzyme catalyses (6R)-5,10-methylene-5,6,7,8-tetrahydrofolate + NADP(+) = (6R)-5,10-methenyltetrahydrofolate + NADPH. The catalysed reaction is (6R)-5,10-methenyltetrahydrofolate + H2O = (6R)-10-formyltetrahydrofolate + H(+). The protein operates within one-carbon metabolism; tetrahydrofolate interconversion. Catalyzes the oxidation of 5,10-methylenetetrahydrofolate to 5,10-methenyltetrahydrofolate and then the hydrolysis of 5,10-methenyltetrahydrofolate to 10-formyltetrahydrofolate. In Maricaulis maris (strain MCS10) (Caulobacter maris), this protein is Bifunctional protein FolD.